Consider the following 665-residue polypeptide: Pentatricopeptide repeat-containing protein At3g02490, mitochondrial (665 aa).

The N-terminal 37 residues, 1–37 (MRYQWRSLLFRSYRSSPRPFLSHHSRFQVISNSTRSF), are a transit peptide targeting the mitochondrion. PPR repeat units follow at residues 280–314 (DEKT…GYEM), 315–349 (EMET…SISN), 352–388 (TPHC…GNVV), 389–423 (PDVM…GYVP), 424–458 (SGDL…GNHL), 459–493 (DDKA…EGVS), 495–530 (AGYA…QLKP), and 536–570 (KIMV…GFPP).

This sequence belongs to the PPR family. P subfamily.

The protein resides in the mitochondrion. This chain is Pentatricopeptide repeat-containing protein At3g02490, mitochondrial, found in Arabidopsis thaliana (Mouse-ear cress).